A 242-amino-acid chain; its full sequence is 1-(5-phosphoribosyl)-5-[(5-phosphoribosylamino)methylideneamino] imidazole-4-carboxamide isomerase (242 aa).

The active-site Proton acceptor is aspartate 10. Residue aspartate 132 is the Proton donor of the active site.

The protein belongs to the HisA/HisF family.

It is found in the cytoplasm. It carries out the reaction 1-(5-phospho-beta-D-ribosyl)-5-[(5-phospho-beta-D-ribosylamino)methylideneamino]imidazole-4-carboxamide = 5-[(5-phospho-1-deoxy-D-ribulos-1-ylimino)methylamino]-1-(5-phospho-beta-D-ribosyl)imidazole-4-carboxamide. The protein operates within amino-acid biosynthesis; L-histidine biosynthesis; L-histidine from 5-phospho-alpha-D-ribose 1-diphosphate: step 4/9. This Streptococcus sanguinis (strain SK36) protein is 1-(5-phosphoribosyl)-5-[(5-phosphoribosylamino)methylideneamino] imidazole-4-carboxamide isomerase.